Consider the following 386-residue polypeptide: Succinate--CoA ligase [ADP-forming] subunit beta (386 aa).

The ATP-grasp domain maps to 9–244 (KEILHKFNVP…YDEEVKEEIE (236 aa)). Residues lysine 46, 53 to 55 (GRG), glutamate 99, serine 102, and glutamate 107 each bind ATP. 2 residues coordinate Mg(2+): asparagine 199 and aspartate 213. Substrate is bound by residues asparagine 264 and 321 to 323 (GIM).

It belongs to the succinate/malate CoA ligase beta subunit family. In terms of assembly, heterotetramer of two alpha and two beta subunits. It depends on Mg(2+) as a cofactor.

The catalysed reaction is succinate + ATP + CoA = succinyl-CoA + ADP + phosphate. It carries out the reaction GTP + succinate + CoA = succinyl-CoA + GDP + phosphate. It participates in carbohydrate metabolism; tricarboxylic acid cycle; succinate from succinyl-CoA (ligase route): step 1/1. Its function is as follows. Succinyl-CoA synthetase functions in the citric acid cycle (TCA), coupling the hydrolysis of succinyl-CoA to the synthesis of either ATP or GTP and thus represents the only step of substrate-level phosphorylation in the TCA. The beta subunit provides nucleotide specificity of the enzyme and binds the substrate succinate, while the binding sites for coenzyme A and phosphate are found in the alpha subunit. The protein is Succinate--CoA ligase [ADP-forming] subunit beta of Wolbachia sp. subsp. Brugia malayi (strain TRS).